Reading from the N-terminus, the 448-residue chain is Exodeoxyribonuclease 7 large subunit (448 aa).

The protein belongs to the XseA family. As to quaternary structure, heterooligomer composed of large and small subunits.

It localises to the cytoplasm. It carries out the reaction Exonucleolytic cleavage in either 5'- to 3'- or 3'- to 5'-direction to yield nucleoside 5'-phosphates.. Bidirectionally degrades single-stranded DNA into large acid-insoluble oligonucleotides, which are then degraded further into small acid-soluble oligonucleotides. The chain is Exodeoxyribonuclease 7 large subunit from Nitrosomonas eutropha (strain DSM 101675 / C91 / Nm57).